The following is a 501-amino-acid chain: Nuclear receptor subfamily 5 group A member 2 (501 aa).

Positions 43-114 (EELCPVCGDK…KCLSVGMKLE (72 aa)) form a DNA-binding region, nuclear receptor. Residues C46, C49, C63, C66, C82, C88, C98, and C101 each coordinate Zn(2+). NR C4-type zinc fingers lie at residues 46-66 (CPVC…CESC) and 82-106 (CIEN…FQKC). The segment at 112–127 (KLEAVRADRMRGGRNK) is C-terminal extension (CTE). The short motif at 128–147 (FGPMYKRDRALKQQKKALIR) is the FTZ-F1 box element. Positions 186–207 (NHTALPPTDYDRSPFVTSPISM) are disordered. One can recognise an NR LBD domain in the interval 260–499 (SIPHLILELQ…NLLIEMLHAK (240 aa)). Residues 381 to 384 (GATL), Y476, and K480 contribute to the a phospholipid derivative site. Positions 488–499 (CNNLLIEMLHAK) are AF-2.

It belongs to the nuclear hormone receptor family. NR5 subfamily. In terms of assembly, monomer; Binds DNA as a monomer. In terms of tissue distribution, detected in liver and adrenal gland.

It is found in the nucleus. It localises to the chromosome. Orphan nuclear receptor that binds DNA as a monomer to the 5'-TCAAGGCCA-3' sequence and controls expression of target genes: regulates key biological processes, such as cholesterol and bile acid synthesis pathways, as well as cartilage, liver and pancreas morphogenesis. Ligand-binding causes conformational change which causes recruitment of coactivators, promoting target gene activation. The specific ligand is unknown, but specific phospholipids, such as phosphatidylethanolamine, phosphatidylserine, dilauroyl phosphatidylcholine and diundecanoyl phosphatidylcholine can act as ligand in vitro. Acts as a pioneer transcription factor, which unwraps target DNA from histones and elicits local opening of closed chromatin. Involved in the formation of connective tissue in lower jaw. In Gallus gallus (Chicken), this protein is Nuclear receptor subfamily 5 group A member 2.